Reading from the N-terminus, the 281-residue chain is Pantothenate synthetase (281 aa).

30 to 37 is a binding site for ATP; the sequence is MGNLHQGH. The Proton donor role is filled by His-37. Gln-61 contacts (R)-pantoate. Residue Gln-61 coordinates beta-alanine. ATP is bound at residue 149 to 152; the sequence is GNKD. Gln-155 contributes to the (R)-pantoate binding site. ATP-binding positions include Ile-178 and 186 to 189; that span reads MSSR.

This sequence belongs to the pantothenate synthetase family. As to quaternary structure, homodimer.

It is found in the cytoplasm. It catalyses the reaction (R)-pantoate + beta-alanine + ATP = (R)-pantothenate + AMP + diphosphate + H(+). It participates in cofactor biosynthesis; (R)-pantothenate biosynthesis; (R)-pantothenate from (R)-pantoate and beta-alanine: step 1/1. Functionally, catalyzes the condensation of pantoate with beta-alanine in an ATP-dependent reaction via a pantoyl-adenylate intermediate. This chain is Pantothenate synthetase, found in Shewanella oneidensis (strain ATCC 700550 / JCM 31522 / CIP 106686 / LMG 19005 / NCIMB 14063 / MR-1).